A 688-amino-acid chain; its full sequence is Glycine--tRNA ligase beta subunit (688 aa).

The protein belongs to the class-II aminoacyl-tRNA synthetase family. In terms of assembly, tetramer of two alpha and two beta subunits.

It is found in the cytoplasm. It catalyses the reaction tRNA(Gly) + glycine + ATP = glycyl-tRNA(Gly) + AMP + diphosphate. The chain is Glycine--tRNA ligase beta subunit from Psychromonas ingrahamii (strain DSM 17664 / CCUG 51855 / 37).